A 347-amino-acid polypeptide reads, in one-letter code: UDP-galactose/UDP-glucose transporter 5 (347 aa).

Transmembrane regions (helical) follow at residues 17-37 (LWKA…YGLL), 57-77 (LFLV…ALLA), 116-136 (VQTL…TLIM), 143-163 (FDYL…LFPA), 177-197 (TVWG…TSTF), 218-238 (ICSS…LPAV), 247-267 (CLFD…FISY), and 293-313 (CIWF…IVFG). The tract at residues 325–347 (SEKPPAAQELPRDEEAQPLKGNP) is disordered.

It belongs to the nucleotide-sugar transporter family. UDP-galactose:UMP antiporter (TC 2.A.7.11) subfamily.

The protein localises to the membrane. Its function is as follows. Sugar transporter involved in the transport of nucleotide-sugars from cytoplasm into the Golgi and/or the endoplasmic reticulum. The chain is UDP-galactose/UDP-glucose transporter 5 from Arabidopsis thaliana (Mouse-ear cress).